A 197-amino-acid chain; its full sequence is Protein GrpE (197 aa).

Residues 1–39 (MSSKEQKTPEGQAPEEIIMDQHEEIEAVEPEASAEQVDP) form a disordered region.

The protein belongs to the GrpE family. Homodimer.

It is found in the cytoplasm. Functionally, participates actively in the response to hyperosmotic and heat shock by preventing the aggregation of stress-denatured proteins, in association with DnaK and GrpE. It is the nucleotide exchange factor for DnaK and may function as a thermosensor. Unfolded proteins bind initially to DnaJ; upon interaction with the DnaJ-bound protein, DnaK hydrolyzes its bound ATP, resulting in the formation of a stable complex. GrpE releases ADP from DnaK; ATP binding to DnaK triggers the release of the substrate protein, thus completing the reaction cycle. Several rounds of ATP-dependent interactions between DnaJ, DnaK and GrpE are required for fully efficient folding. This is Protein GrpE from Escherichia coli O45:K1 (strain S88 / ExPEC).